The primary structure comprises 257 residues: Probable enoyl-CoA hydratase echA17 (257 aa).

The protein belongs to the enoyl-CoA hydratase/isomerase family.

It carries out the reaction a (3S)-3-hydroxyacyl-CoA = a (2E)-enoyl-CoA + H2O. It catalyses the reaction a 4-saturated-(3S)-3-hydroxyacyl-CoA = a (3E)-enoyl-CoA + H2O. In terms of biological role, could possibly oxidize fatty acids using specific components. In Mycobacterium avium (strain 104), this protein is Probable enoyl-CoA hydratase echA17 (echA17).